Here is an 884-residue protein sequence, read N- to C-terminus: DNA mismatch repair protein MutS (884 aa).

601–608 (GPNMSGKS) is a binding site for ATP. The segment at 826–845 (ESQLSFFGGEQSSKKQDKPL) is disordered.

It belongs to the DNA mismatch repair MutS family.

This protein is involved in the repair of mismatches in DNA. It is possible that it carries out the mismatch recognition step. This protein has a weak ATPase activity. The protein is DNA mismatch repair protein MutS of Bacillus cereus (strain ATCC 14579 / DSM 31 / CCUG 7414 / JCM 2152 / NBRC 15305 / NCIMB 9373 / NCTC 2599 / NRRL B-3711).